We begin with the raw amino-acid sequence, 699 residues long: MNPSEMQRKAPPRRRRHRNRAPLTHKMNKMVTSEEQMKLPSTKKAEPPTWAQLKKLTQLATKYLENTKVTQTPESMLLAALMIVSMVVSLPMPAGAAAANYTYWAYVPFPPLIRAVTWMDNPIEVYVNDSVWVPGPTDDHCPAKPEEEGMMINISIGYRYPPICLGRAPGCLMPAVQNWLVEVPTVSPISRFTYHMVSGMSLRPRVNYLQDFSYQRSFKFRPKGKPCPKEIPKESKNTEVLVWEECVANSAVILQNNEFGTIIDWAPRGQFYHNCSGQTQSCPSAQVSPAVDSDLTESLDKHKHKKLQSFYPWEWGEKGISTPRPKIISPVSGPEHPELWRLTVASHHIRIWSGNQTLETRDRKPFYTVDLNSSLTVPLQSCIKPPYMLVVGNIVIKPDSQTITCENCRLLTCIDSTFNWQHRILLVRAREGVWIPVSMDRPWEASPSIHTLTEVLKGVLNRSKRFIFTLIAVIMGLIAVTATAAVAGVALHSSVQSVNFVNDWQKNSTRLWNSQSSIDQKLANQINDLRQTVIWMGDRLMSLEHRFQLQCDWNTSDFSITPQIYNESEHHWDMVRRHLQGREDNLTLDISKLKEQIFEASKAHLNLVPGTEAIAGVADGLANLNPVTWVKTIGSTTIINLILILVCLFCLLLVCRCTQQLRRDSDHRERAMMTMAVLSKRKGGNVGKSKRDQIVTVSV.

The interval 1–47 (MNPSEMQRKAPPRRRRHRNRAPLTHKMNKMVTSEEQMKLPSTKKAEP) is disordered. A signal peptide spans 1–89 (MNPSEMQRKA…ALMIVSMVVS (89 aa)). The segment covering 10–20 (APPRRRRHRNR) has biased composition (basic residues). Topologically, residues 90-632 (LPMPAGAAAA…NLNPVTWVKT (543 aa)) are extracellular. Residues Asn100, Asn128, Asn153, Asn274, Asn355, Asn372, and Asn461 are each glycosylated (N-linked (GlcNAc...) asparagine). The segment at 466–486 (FIFTLIAVIMGLIAVTATAAV) is fusion peptide. N-linked (GlcNAc...) asparagine glycans are attached at residues Asn507, Asn554, Asn566, and Asn585. The chain crosses the membrane as a helical span at residues 633–653 (IGSTTIINLILILVCLFCLLL). Residues 654–699 (VCRCTQQLRRDSDHRERAMMTMAVLSKRKGGNVGKSKRDQIVTVSV) are Cytoplasmic-facing.

Belongs to the beta type-B retroviral envelope protein family. HERV class-II K(HML-2) env subfamily. In terms of assembly, the surface (SU) and transmembrane (TM) proteins form a heterodimer. SU and TM are attached by noncovalent interactions or by a labile interchain disulfide bond. Post-translationally, specific enzymatic cleavages in vivo yield the mature SU and TM proteins.

The protein resides in the cell membrane. It is found in the virion. In terms of biological role, retroviral envelope proteins mediate receptor recognition and membrane fusion during early infection. Endogenous envelope proteins may have kept, lost or modified their original function during evolution. This endogenous envelope protein has lost its original fusogenic properties. Functionally, SU mediates receptor recognition. Its function is as follows. TM anchors the envelope heterodimer to the viral membrane through one transmembrane domain. The other hydrophobic domain, called fusion peptide, mediates fusion of the viral membrane with the target cell membrane. In Homo sapiens (Human), this protein is Endogenous retrovirus group K member 113 Env polyprotein (HERVK_113).